Consider the following 78-residue polypeptide: Acyl carrier protein (78 aa).

In terms of domain architecture, Carrier spans S2–Q77. O-(pantetheine 4'-phosphoryl)serine is present on S37.

It belongs to the acyl carrier protein (ACP) family. Post-translationally, 4'-phosphopantetheine is transferred from CoA to a specific serine of apo-ACP by AcpS. This modification is essential for activity because fatty acids are bound in thioester linkage to the sulfhydryl of the prosthetic group.

The protein localises to the cytoplasm. The protein operates within lipid metabolism; fatty acid biosynthesis. Functionally, carrier of the growing fatty acid chain in fatty acid biosynthesis. This is Acyl carrier protein from Pseudomonas putida (strain ATCC 700007 / DSM 6899 / JCM 31910 / BCRC 17059 / LMG 24140 / F1).